The following is a 179-amino-acid chain: Guanosine-3',5'-bis(diphosphate) 3'-pyrophosphohydrolase MESH1 (179 aa).

The 96-residue stretch at 32–127 (YINHPLGVAR…VKLADKLYNL (96 aa)) folds into the HD domain. Mn(2+)-binding residues include histidine 35, histidine 61, and aspartate 62. Catalysis depends on nucleophile residues glutamate 65 and aspartate 66. Aspartate 122 is a binding site for Mn(2+).

The protein belongs to the MESH1 family. The cofactor is Mn(2+).

It catalyses the reaction guanosine 3',5'-bis(diphosphate) + H2O = GDP + diphosphate + H(+). In terms of biological role, ppGpp hydrolyzing enzyme involved in starvation response. The chain is Guanosine-3',5'-bis(diphosphate) 3'-pyrophosphohydrolase MESH1 (hddc3) from Xenopus tropicalis (Western clawed frog).